A 142-amino-acid chain; its full sequence is Truncated non-functional hemagglutinin-esterase homolog (142 aa).

At 1-117 the chain is on the virion surface side; the sequence is MNFTVPVQAI…ESVDVISSSY (117 aa). Asparagine 2 is a glycosylation site (N-linked (GlcNAc...) asparagine; by host). A disulfide bond links cysteine 28 and cysteine 33. N-linked (GlcNAc...) asparagine; by host glycosylation is found at asparagine 46 and asparagine 67. A disulfide bridge connects residues cysteine 70 and cysteine 95. Residues 118-138 traverse the membrane as a helical segment; that stretch reads FVATWVLLVVVIILVFIIISF. The Intravirion portion of the chain corresponds to 139-142; sequence CISN.

It belongs to the influenza type C/coronaviruses hemagglutinin-esterase family. Homodimer. In terms of processing, N-glycosylated.

It localises to the virion membrane. The protein resides in the host cell membrane. This Berne virus (BEV) protein is Truncated non-functional hemagglutinin-esterase homolog (HE).